A 486-amino-acid polypeptide reads, in one-letter code: ATP synthase subunit beta (486 aa).

164–171 (GGAGVGKT) contributes to the ATP binding site.

The protein belongs to the ATPase alpha/beta chains family. In terms of assembly, F-type ATPases have 2 components, CF(1) - the catalytic core - and CF(0) - the membrane proton channel. CF(1) has five subunits: alpha(3), beta(3), gamma(1), delta(1), epsilon(1). CF(0) has four main subunits: a(1), b(1), b'(1) and c(9-12).

The protein localises to the cellular thylakoid membrane. The catalysed reaction is ATP + H2O + 4 H(+)(in) = ADP + phosphate + 5 H(+)(out). Its function is as follows. Produces ATP from ADP in the presence of a proton gradient across the membrane. The catalytic sites are hosted primarily by the beta subunits. This is ATP synthase subunit beta from Prochlorococcus marinus (strain MIT 9312).